Reading from the N-terminus, the 146-residue chain is Large ribosomal subunit protein uL15 (146 aa).

Positions 1–57 are disordered; the sequence is MKLFELQPAPGSKKLPKRKGRGHGTGNGKTAGRGHKGQNARSGGGVRPGFEGGQMPL. The segment covering 42–52 has biased composition (gly residues); sequence SGGGVRPGFEG.

It belongs to the universal ribosomal protein uL15 family. In terms of assembly, part of the 50S ribosomal subunit.

Binds to the 23S rRNA. The chain is Large ribosomal subunit protein uL15 from Acetivibrio thermocellus (strain ATCC 27405 / DSM 1237 / JCM 9322 / NBRC 103400 / NCIMB 10682 / NRRL B-4536 / VPI 7372) (Clostridium thermocellum).